The primary structure comprises 286 residues: Mitochondrial dicarboxylate carrier (286 aa).

Solcar repeat units lie at residues 7-87 (SRWY…MRDY), 100-187 (SKVL…AKQL), and 196-279 (DNIF…LRKH). 3 consecutive transmembrane segments (helical) span residues 9-29 (WYFG…LDLL), 62-81 (GLSA…FAIY), and 102-122 (VLLG…ADLV). K158 is subject to N6-acetyllysine. 3 helical membrane passes run 162–181 (GATM…LSCY), 202–222 (FLSS…LDVL), and 254–274 (GLVP…MFLE).

Belongs to the mitochondrial carrier (TC 2.A.29) family. In terms of tissue distribution, expressed most strongly in liver, then kidney, and at lower levels in heart and brain.

The protein localises to the mitochondrion inner membrane. The catalysed reaction is (S)-malate(in) + phosphate(out) = (S)-malate(out) + phosphate(in). It catalyses the reaction malonate(out) + (S)-malate(in) = malonate(in) + (S)-malate(out). It carries out the reaction (S)-malate(in) + succinate(out) = (S)-malate(out) + succinate(in). The enzyme catalyses (S)-malate(in) + sulfate(out) = (S)-malate(out) + sulfate(in). The catalysed reaction is malonate(out) + phosphate(in) = malonate(in) + phosphate(out). It catalyses the reaction succinate(out) + phosphate(in) = succinate(in) + phosphate(out). It carries out the reaction sulfate(out) + phosphate(in) = sulfate(in) + phosphate(out). The enzyme catalyses malonate(out) + succinate(in) = malonate(in) + succinate(out). In terms of biological role, catalyzes the electroneutral exchange or flux of physiologically important metabolites such as dicarboxylates (malonate, malate, succinate), inorganic sulfur-containing anions, and phosphate, across mitochondrial inner membrane. Plays an important role in gluconeogenesis, fatty acid metabolism, urea synthesis, and sulfur metabolism, particularly in liver, by supplying the substrates for the different metabolic processes. Regulates fatty acid release from adipocytes, and contributes to systemic insulin sensitivity. The chain is Mitochondrial dicarboxylate carrier from Rattus norvegicus (Rat).